The chain runs to 247 residues: uncharacterized protein (247 aa).

Positions 11 to 85 (GMSIGAVLDL…LKVIRAQLDA (75 aa)) constitute an HTH merR-type domain. The H-T-H motif DNA-binding region spans 14-38 (IGAVLDLLRPDFPDVTISKIRFLEA).

As to quaternary structure, homodimer.

In terms of biological role, transcriptional regulator that binds to its own promoter and thus may play a role in the regulation of the cotranscribed genes Rv1827 and Rv1828. Can also bind several promoter regions of genes that are essential, including ftsZ. Binds to the imperfect everted repeat sequence CTCAA through its winged-HTH motif. This is an uncharacterized protein from Mycobacterium tuberculosis (strain ATCC 25618 / H37Rv).